The primary structure comprises 846 residues: Translation initiation factor IF-2 (846 aa).

The interval 198-219 is disordered; sequence YKREEEEKKSKAKKAGGKGFKK. Residues 207-219 are compositionally biased toward basic residues; the sequence is SKAKKAGGKGFKK. Positions 345–512 constitute a tr-type G domain; that stretch reads SRAPVVTIMG…AVLLQSEVLE (168 aa). The G1 stretch occupies residues 354-361; it reads GHVDHGKT. A GTP-binding site is contributed by 354-361; that stretch reads GHVDHGKT. The interval 379 to 383 is G2; it reads GITQH. Residues 400–403 form a G3 region; it reads DTPG. GTP-binding positions include 400 to 404 and 454 to 457; these read DTPGH and NKID. Residues 454-457 are G4; it reads NKID. The segment at 490–492 is G5; that stretch reads SAK.

It belongs to the TRAFAC class translation factor GTPase superfamily. Classic translation factor GTPase family. IF-2 subfamily.

The protein resides in the cytoplasm. In terms of biological role, one of the essential components for the initiation of protein synthesis. Protects formylmethionyl-tRNA from spontaneous hydrolysis and promotes its binding to the 30S ribosomal subunits. Also involved in the hydrolysis of GTP during the formation of the 70S ribosomal complex. This chain is Translation initiation factor IF-2, found in Francisella tularensis subsp. holarctica (strain OSU18).